The following is a 227-amino-acid chain: Phosphoribosylformylglycinamidine synthase subunit PurQ (227 aa).

One can recognise a Glutamine amidotransferase type-1 domain in the interval 3–227; that stretch reads FAVIVFPGSN…NWRESHVTAS (225 aa). Residue cysteine 86 is the Nucleophile of the active site. Catalysis depends on residues histidine 194 and glutamate 196.

As to quaternary structure, part of the FGAM synthase complex composed of 1 PurL, 1 PurQ and 2 PurS subunits.

Its subcellular location is the cytoplasm. The catalysed reaction is N(2)-formyl-N(1)-(5-phospho-beta-D-ribosyl)glycinamide + L-glutamine + ATP + H2O = 2-formamido-N(1)-(5-O-phospho-beta-D-ribosyl)acetamidine + L-glutamate + ADP + phosphate + H(+). It catalyses the reaction L-glutamine + H2O = L-glutamate + NH4(+). It participates in purine metabolism; IMP biosynthesis via de novo pathway; 5-amino-1-(5-phospho-D-ribosyl)imidazole from N(2)-formyl-N(1)-(5-phospho-D-ribosyl)glycinamide: step 1/2. In terms of biological role, part of the phosphoribosylformylglycinamidine synthase complex involved in the purines biosynthetic pathway. Catalyzes the ATP-dependent conversion of formylglycinamide ribonucleotide (FGAR) and glutamine to yield formylglycinamidine ribonucleotide (FGAM) and glutamate. The FGAM synthase complex is composed of three subunits. PurQ produces an ammonia molecule by converting glutamine to glutamate. PurL transfers the ammonia molecule to FGAR to form FGAM in an ATP-dependent manner. PurS interacts with PurQ and PurL and is thought to assist in the transfer of the ammonia molecule from PurQ to PurL. This is Phosphoribosylformylglycinamidine synthase subunit PurQ from Shouchella clausii (strain KSM-K16) (Alkalihalobacillus clausii).